A 291-amino-acid chain; its full sequence is Bifunctional protein FolD 1 (291 aa).

NADP(+) contacts are provided by residues 167 to 169, I192, and I233; that span reads GAS.

This sequence belongs to the tetrahydrofolate dehydrogenase/cyclohydrolase family. Homodimer.

It catalyses the reaction (6R)-5,10-methylene-5,6,7,8-tetrahydrofolate + NADP(+) = (6R)-5,10-methenyltetrahydrofolate + NADPH. The enzyme catalyses (6R)-5,10-methenyltetrahydrofolate + H2O = (6R)-10-formyltetrahydrofolate + H(+). It participates in one-carbon metabolism; tetrahydrofolate interconversion. Catalyzes the oxidation of 5,10-methylenetetrahydrofolate to 5,10-methenyltetrahydrofolate and then the hydrolysis of 5,10-methenyltetrahydrofolate to 10-formyltetrahydrofolate. In Pseudomonas putida (strain ATCC 47054 / DSM 6125 / CFBP 8728 / NCIMB 11950 / KT2440), this protein is Bifunctional protein FolD 1.